A 667-amino-acid polypeptide reads, in one-letter code: MSNAHHDAFDKATKAGFIIALGIVYGDIGTSPLYTMQSLVDNQGGLSQVSEAFILGSVSLIIWTLTLITTIKYVLIALKADNHHEGGIFSLFTLVRRMSRWLIIPAMLGGATLLSDGALTPAVTVTSAIEGLKAVPELSSIYQNQTNVILTTLLILMVLFGLQRFGTGVIGKLFGPVMLVWFSVLGISGLLNSLQHLEILKAINPYYALHLLVSPENHRGIFILGSIFLATTGAEALYSDLGHVGRGNIYASWPFVKVCIILSYCGQAAWILAHKDSGIALNPFFASVPEGLRVYLVILATLAAIIASQALISGSFTLVSEAMRLKIFPLFKITYPGANLGQLYIPVINWSLFAVTSCTVLYFRTSAHMEAAYGLAITITMLMTTILLAYYLIKEGVKPLLASLLMAFFAFIEFIFFLASAVKFMHGGYVVVVLALAIVFVMVIWHAGTVIVAKYVKSLSLNDYKHQIKLLRDDLRFDLYQTNVVYLTNRMKKDLIDRSILYSILDKRPKRAQVYWFVNVRVTDEPYTATYKVDMLGTDYIVCVELYLGFRMPQTVPRYLRTIVQDLMESGRLPKQVQDYTITPGREVGDFRFVIIEERVSHARQLSTLERFVMQTKASIKHVTASPMRWFGLQYSEATVEVVPLLLSDVLKLPIKEIKACTKDEKA.

12 helical membrane-spanning segments follow: residues 16 to 36 (GFIIALGIVYGDIGTSPLYTM), 58 to 78 (VSLIIWTLTLITTIKYVLIAL), 101 to 121 (WLIIPAMLGGATLLSDGALTP), 146 to 166 (TNVILTTLLILMVLFGLQRFG), 167 to 187 (TGVIGKLFGPVMLVWFSVLGI), 221 to 241 (IFILGSIFLATTGAEALYSDL), 253 to 273 (WPFVKVCIILSYCGQAAWILA), 294 to 314 (VYLVILATLAAIIASQALISG), 343 to 363 (LYIPVINWSLFAVTSCTVLYF), 373 to 393 (YGLAITITMLMTTILLAYYLI), 399 to 419 (PLLASLLMAFFAFIEFIFFLA), and 431 to 451 (VVVLALAIVFVMVIWHAGTVI).

It belongs to the HAK/KUP transporter (TC 2.A.72) family.

Its subcellular location is the cell membrane. It carries out the reaction K(+)(in) + H(+)(in) = K(+)(out) + H(+)(out). Its function is as follows. Transport of potassium into the cell. Likely operates as a K(+):H(+) symporter. This chain is Probable potassium transport system protein Kup, found in Streptococcus equi subsp. zooepidemicus (strain MGCS10565).